A 445-amino-acid chain; its full sequence is Phosphoglucosamine mutase (445 aa).

Catalysis depends on serine 102, which acts as the Phosphoserine intermediate. 4 residues coordinate Mg(2+): serine 102, aspartate 241, aspartate 243, and aspartate 245. Position 102 is a phosphoserine (serine 102).

Belongs to the phosphohexose mutase family. Mg(2+) is required as a cofactor. Activated by phosphorylation.

It carries out the reaction alpha-D-glucosamine 1-phosphate = D-glucosamine 6-phosphate. Catalyzes the conversion of glucosamine-6-phosphate to glucosamine-1-phosphate. This chain is Phosphoglucosamine mutase, found in Aliivibrio fischeri (strain ATCC 700601 / ES114) (Vibrio fischeri).